The primary structure comprises 106 residues: Nucleoid-associated protein MCCL_1934 (106 aa).

Positions 1–34 (MRGGGNMQQMMKQMQKMQKKMAEEQEKLKEERIE) are disordered. Over residues 7–16 (MQQMMKQMQK) the composition is skewed to low complexity. A compositionally biased stretch (basic and acidic residues) spans 20–34 (KMAEEQEKLKEERIE).

The protein belongs to the YbaB/EbfC family. As to quaternary structure, homodimer.

It localises to the cytoplasm. Its subcellular location is the nucleoid. In terms of biological role, binds to DNA and alters its conformation. May be involved in regulation of gene expression, nucleoid organization and DNA protection. This Macrococcus caseolyticus (strain JCSC5402) (Macrococcoides caseolyticum) protein is Nucleoid-associated protein MCCL_1934.